A 141-amino-acid chain; its full sequence is Large ribosomal subunit protein uL11 (141 aa).

It belongs to the universal ribosomal protein uL11 family. In terms of assembly, part of the ribosomal stalk of the 50S ribosomal subunit. Interacts with L10 and the large rRNA to form the base of the stalk. L10 forms an elongated spine to which L12 dimers bind in a sequential fashion forming a multimeric L10(L12)X complex. One or more lysine residues are methylated.

In terms of biological role, forms part of the ribosomal stalk which helps the ribosome interact with GTP-bound translation factors. This Latilactobacillus sakei subsp. sakei (strain 23K) (Lactobacillus sakei subsp. sakei) protein is Large ribosomal subunit protein uL11.